The chain runs to 221 residues: Urease accessory protein UreF (221 aa).

This sequence belongs to the UreF family. UreD, UreF and UreG form a complex that acts as a GTP-hydrolysis-dependent molecular chaperone, activating the urease apoprotein by helping to assemble the nickel containing metallocenter of UreC. The UreE protein probably delivers the nickel.

Its subcellular location is the cytoplasm. Its function is as follows. Required for maturation of urease via the functional incorporation of the urease nickel metallocenter. In Teredinibacter turnerae (strain ATCC 39867 / T7901), this protein is Urease accessory protein UreF.